The following is a 336-amino-acid chain: MLRFIAIVALIATVNAKGGTYGIGVLPSVTYVSGGGGGYPGIYGTYGGGFPGIYGGFGPGGVYGSINSYGGVSTGAYGLYGTSPAVRGAAQGAAAASALGIASGVPSRVSGSSIGIGGGRALVSGSATPIGYYGVPYGGYGYGVPSYGYGYGYPSYGISYGYPGYGYGGYGGYGYPDVAYFGGSTYGNLATGAISSPTSGVTIPYGGALGLYGGYGGYGLGSTYGGYGYGVPSYGYGYGYPSYGISYGYPGYGYGGYGGYGYPDVAHFGGSTYGNLATGAISSPTSGVTIPYGGALGLYGGYGSYGYGPGIYGGGIYGSGGGIYSGGATIIRRKKY.

Positions 1–16 (MLRFIAIVALIATVNA) are cleaved as a signal peptide.

In terms of tissue distribution, prismatic layer of shell (at protein level). Expressed primarily in the mantle with highest level in the mantle edge and lower level in the mantle pallium.

It localises to the secreted. In Pinctada maxima (Silver-lipped pearl oyster), this protein is Shematrin-like protein 1.